The sequence spans 212 residues: Peptide methionine sulfoxide reductase MsrA (212 aa).

The active site involves C52.

Belongs to the MsrA Met sulfoxide reductase family.

It carries out the reaction L-methionyl-[protein] + [thioredoxin]-disulfide + H2O = L-methionyl-(S)-S-oxide-[protein] + [thioredoxin]-dithiol. The catalysed reaction is [thioredoxin]-disulfide + L-methionine + H2O = L-methionine (S)-S-oxide + [thioredoxin]-dithiol. In terms of biological role, has an important function as a repair enzyme for proteins that have been inactivated by oxidation. Catalyzes the reversible oxidation-reduction of methionine sulfoxide in proteins to methionine. This chain is Peptide methionine sulfoxide reductase MsrA, found in Yersinia pseudotuberculosis serotype O:1b (strain IP 31758).